The sequence spans 194 residues: Peptidyl-tRNA hydrolase (194 aa).

Tyr-17 serves as a coordination point for tRNA. Residue His-22 is the Proton acceptor of the active site. The tRNA site is built by Tyr-68, Asn-70, and Asn-116.

The protein belongs to the PTH family. In terms of assembly, monomer.

It localises to the cytoplasm. The enzyme catalyses an N-acyl-L-alpha-aminoacyl-tRNA + H2O = an N-acyl-L-amino acid + a tRNA + H(+). Its function is as follows. Hydrolyzes ribosome-free peptidyl-tRNAs (with 1 or more amino acids incorporated), which drop off the ribosome during protein synthesis, or as a result of ribosome stalling. Catalyzes the release of premature peptidyl moieties from peptidyl-tRNA molecules trapped in stalled 50S ribosomal subunits, and thus maintains levels of free tRNAs and 50S ribosomes. The polypeptide is Peptidyl-tRNA hydrolase (Pseudomonas fluorescens (strain ATCC BAA-477 / NRRL B-23932 / Pf-5)).